The sequence spans 347 residues: Dolichyl-diphosphooligosaccharide--protein glycosyltransferase subunit TUSC3 (347 aa).

The first 41 residues, 1-41, serve as a signal peptide directing secretion; that stretch reads MSARAAPSRRRQAGRRLRYLPTGSFPFLLLLLLLCIQLGGG. At 42 to 196 the chain is on the lumenal side; the sequence is QKKKENLLAE…DVHIRVFRPP (155 aa). In terms of domain architecture, Thioredoxin spans 59–187; it reads WSSRRSIFRM…LAKWIADRTD (129 aa). An N-linked (GlcNAc...) asparagine glycan is attached at Asn83. An intrachain disulfide couples Cys99 to Cys102. Residues 197–217 form a helical membrane-spanning segment; it reads NYSGTIALALLVSLVGGLLYL. Residues 218 to 221 are Cytoplasmic-facing; that stretch reads RRNN. The helical transmembrane segment at 222–242 threads the bilayer; it reads LEFIYNKTGWAMVSLCIVFAM. At 243-276 the chain is on the lumenal side; sequence TSGQMWNHIRGPPYAHKNPHNGQVSYIHGSSQAQ. A helical transmembrane segment spans residues 277–297; it reads FVAESHIILVLNAAITMGMVL. Over 298–312 the chain is Cytoplasmic; it reads LNEAATSKGDVGKRR. Residues 313–333 traverse the membrane as a helical segment; it reads IICLVGLGLVVFFFSFLLSIF. At 334–347 the chain is on the lumenal side; it reads RSKYHGYPYSFLIK.

It belongs to the OST3/OST6 family. In terms of assembly, accessory component of the STT3B-containing form of the oligosaccharyltransferase (OST) complex. OST exists in two different complex forms which contain common core subunits RPN1, RPN2, OST48, OST4, DAD1 and TMEM258, either STT3A or STT3B as catalytic subunits, and form-specific accessory subunits. OST can form stable complexes with the Sec61 complex or with both the Sec61 and TRAP complexes. The association of TUSC3 or MAGT1 with the STT3B-containing complex seems to be mutually exclusvice.

Its subcellular location is the endoplasmic reticulum membrane. It functions in the pathway protein modification; protein glycosylation. Its function is as follows. Acts as accessory component of the N-oligosaccharyl transferase (OST) complex which catalyzes the transfer of a high mannose oligosaccharide from a lipid-linked oligosaccharide donor to an asparagine residue within an Asn-X-Ser/Thr consensus motif in nascent polypeptide chains. Involved in N-glycosylation of STT3B-dependent substrates. Specifically required for the glycosylation of a subset of acceptor sites that are near cysteine residues; in this function seems to act redundantly with MAGT1. In its oxidized form proposed to form transient mixed disulfides with a glycoprotein substrate to facilitate access of STT3B to the unmodified acceptor site. Also has oxidoreductase-independent functions in the STT3B-containing OST complex possibly involving substrate recognition. Could indirectly play a role in Mg(2+) transport. The chain is Dolichyl-diphosphooligosaccharide--protein glycosyltransferase subunit TUSC3 (Tusc3) from Mus musculus (Mouse).